Here is a 492-residue protein sequence, read N- to C-terminus: BTB/POZ domain and ankyrin repeat-containing protein NOOT2 (492 aa).

In terms of domain architecture, BTB spans 25-107 (SDVTFQVEGR…LYSGQVSIVP (83 aa)). A C2HC NPR-type zinc finger spans residues 113 to 127 (RPNCGERGCWHTHCT). Residues cysteine 116, cysteine 121, histidine 123, and cysteine 126 each contribute to the Zn(2+) site. ANK repeat units lie at residues 248-277 (QKIR…LNLD), 278-307 (EALA…DVNY), 312-341 (AGKT…DPTV), and 345-379 (DGVT…KLRL). Disordered regions lie at residues 395-439 (ENNA…NSIG) and 455-492 (TQMG…SHDF). Composition is skewed to low complexity over residues 397-413 (NASN…SSAA) and 425-439 (SSSS…NSIG). Positions 461-473 (DDNRHNNSHREAM) are enriched in basic and acidic residues.

It belongs to the plant 'ANKYRIN-BTB/POZ' family. 'NOOT-BOP-COCH-like' (NBCL) subfamily. In terms of assembly, homodimer.

The protein resides in the nucleus. Its subcellular location is the cytoplasm. It is found in the cell membrane. Its pathway is protein modification; protein ubiquitination. Its function is as follows. May act as a substrate-specific adapter of an E3 ubiquitin-protein ligase complex (CUL3-RBX1-BTB) which mediates the ubiquitination and subsequent proteasomal degradation of target proteins. Transcriptional co-regulator involved in the promotion of leaf and floral meristem fate and determinacy. Required for the abscission of senescent organs, probably by regulating the cell wall disorganization in abscission zones (AZs, e.g. pulvini at the base of leaves). Involved in the coordination of the symbiotic nodule developmental program; promotes the formation of root nodules by interacting directly with APP1 to modulate the expression of the nuclear transcription factor Y subunit (NF-YA1), a key nodulin. Involved in the regulation of indeterminate nodule identity in association with NOOT1. In Medicago truncatula (Barrel medic), this protein is BTB/POZ domain and ankyrin repeat-containing protein NOOT2.